A 70-amino-acid polypeptide reads, in one-letter code: MPRLPPALRLLQPPLRCWVVPKLHVSAKPARTPTSPAEQAVGLSMMFLSFLVPAGWVLSHLESYKKSSTA.

The transit peptide at 1 to 24 (MPRLPPALRLLQPPLRCWVVPKLH) directs the protein to the mitochondrion. Residues 25-35 (VSAKPARTPTS) are Mitochondrial matrix-facing. The chain crosses the membrane as a helical span at residues 36 to 59 (PAEQAVGLSMMFLSFLVPAGWVLS). Residues 60–70 (HLESYKKSSTA) are Mitochondrial intermembrane-facing.

Belongs to the cytochrome c oxidase VIII family. In terms of assembly, component of the cytochrome c oxidase (complex IV, CIV), a multisubunit enzyme composed of 14 subunits. The complex is composed of a catalytic core of 3 subunits MT-CO1, MT-CO2 and MT-CO3, encoded in the mitochondrial DNA, and 11 supernumerary subunits COX4I, COX5A, COX5B, COX6A, COX6B, COX6C, COX7A, COX7B, COX7C, COX8 and NDUFA4, which are encoded in the nuclear genome. The complex exists as a monomer or a dimer and forms supercomplexes (SCs) in the inner mitochondrial membrane with NADH-ubiquinone oxidoreductase (complex I, CI) and ubiquinol-cytochrome c oxidoreductase (cytochrome b-c1 complex, complex III, CIII), resulting in different assemblies (supercomplex SCI(1)III(2)IV(1) and megacomplex MCI(2)III(2)IV(2)).

The protein localises to the mitochondrion inner membrane. It functions in the pathway energy metabolism; oxidative phosphorylation. Component of the cytochrome c oxidase, the last enzyme in the mitochondrial electron transport chain which drives oxidative phosphorylation. The respiratory chain contains 3 multisubunit complexes succinate dehydrogenase (complex II, CII), ubiquinol-cytochrome c oxidoreductase (cytochrome b-c1 complex, complex III, CIII) and cytochrome c oxidase (complex IV, CIV), that cooperate to transfer electrons derived from NADH and succinate to molecular oxygen, creating an electrochemical gradient over the inner membrane that drives transmembrane transport and the ATP synthase. Cytochrome c oxidase is the component of the respiratory chain that catalyzes the reduction of oxygen to water. Electrons originating from reduced cytochrome c in the intermembrane space (IMS) are transferred via the dinuclear copper A center (CU(A)) of subunit 2 and heme A of subunit 1 to the active site in subunit 1, a binuclear center (BNC) formed by heme A3 and copper B (CU(B)). The BNC reduces molecular oxygen to 2 water molecules using 4 electrons from cytochrome c in the IMS and 4 protons from the mitochondrial matrix. The protein is Cytochrome c oxidase subunit 8B, mitochondrial (COX8B) of Eulemur fulvus fulvus (Brown lemur).